A 298-amino-acid polypeptide reads, in one-letter code: Sulfate adenylyltransferase subunit 2 (298 aa).

Basic and acidic residues-rich tracts occupy residues 272–282 (RTSERQGRLID) and 289–298 (MEKKKQEGYF). Residues 272-298 (RTSERQGRLIDSDSAGSMEKKKQEGYF) are disordered.

It belongs to the PAPS reductase family. CysD subfamily. As to quaternary structure, heterodimer composed of CysD, the smaller subunit, and CysN.

It carries out the reaction sulfate + ATP + H(+) = adenosine 5'-phosphosulfate + diphosphate. It participates in sulfur metabolism; hydrogen sulfide biosynthesis; sulfite from sulfate: step 1/3. In terms of biological role, with CysN forms the ATP sulfurylase (ATPS) that catalyzes the adenylation of sulfate producing adenosine 5'-phosphosulfate (APS) and diphosphate, the first enzymatic step in sulfur assimilation pathway. APS synthesis involves the formation of a high-energy phosphoric-sulfuric acid anhydride bond driven by GTP hydrolysis by CysN coupled to ATP hydrolysis by CysD. This chain is Sulfate adenylyltransferase subunit 2, found in Burkholderia lata (strain ATCC 17760 / DSM 23089 / LMG 22485 / NCIMB 9086 / R18194 / 383).